The primary structure comprises 465 residues: 3-isopropylmalate dehydratase large subunit (465 aa).

[4Fe-4S] cluster-binding residues include cysteine 347, cysteine 407, and cysteine 410. Positions 416–443 (DTLRPGERSASTSNRNFEGRQGPGGRTH) are disordered.

The protein belongs to the aconitase/IPM isomerase family. LeuC type 1 subfamily. As to quaternary structure, heterodimer of LeuC and LeuD. It depends on [4Fe-4S] cluster as a cofactor.

The catalysed reaction is (2R,3S)-3-isopropylmalate = (2S)-2-isopropylmalate. It functions in the pathway amino-acid biosynthesis; L-leucine biosynthesis; L-leucine from 3-methyl-2-oxobutanoate: step 2/4. Its function is as follows. Catalyzes the isomerization between 2-isopropylmalate and 3-isopropylmalate, via the formation of 2-isopropylmaleate. This Frankia alni (strain DSM 45986 / CECT 9034 / ACN14a) protein is 3-isopropylmalate dehydratase large subunit.